We begin with the raw amino-acid sequence, 238 residues long: Ubiquinone biosynthesis O-methyltransferase (238 aa).

Residues R40, G59, D81, and M126 each coordinate S-adenosyl-L-methionine.

This sequence belongs to the methyltransferase superfamily. UbiG/COQ3 family.

The catalysed reaction is a 3-demethylubiquinol + S-adenosyl-L-methionine = a ubiquinol + S-adenosyl-L-homocysteine + H(+). The enzyme catalyses a 3-(all-trans-polyprenyl)benzene-1,2-diol + S-adenosyl-L-methionine = a 2-methoxy-6-(all-trans-polyprenyl)phenol + S-adenosyl-L-homocysteine + H(+). Its pathway is cofactor biosynthesis; ubiquinone biosynthesis. Functionally, O-methyltransferase that catalyzes the 2 O-methylation steps in the ubiquinone biosynthetic pathway. The sequence is that of Ubiquinone biosynthesis O-methyltransferase from Neisseria meningitidis serogroup C (strain 053442).